The sequence spans 286 residues: Neuferricin homolog (286 aa).

A signal peptide spans 1–23 (MFGFVKYLFKLQFLFILAAVLAG). One can recognise a Cytochrome b5 heme-binding domain in the interval 61–145 (ATVLTSAELS…KPNDLLGLAN (85 aa)). Residues 176–200 (HKYLALLEQAQIAKAEVDELRSKYP) adopt a coiled-coil conformation.

Belongs to the cytochrome b5 family. MAPR subfamily.

It localises to the secreted. Functionally, heme-binding protein. In Drosophila pseudoobscura pseudoobscura (Fruit fly), this protein is Neuferricin homolog.